Here is a 463-residue protein sequence, read N- to C-terminus: Probable glycosyltransferase 3 (463 aa).

The tract at residues 1–20 (MAVTGGGRPAARQQAARGKQ) is disordered. Residues 1-24 (MAVTGGGRPAARQQAARGKQMQRT) lie on the Cytoplasmic side of the membrane. Over residues 9 to 20 (PAARQQAARGKQ) the composition is skewed to low complexity. Residues 25–47 (FNNVKITLICGFITLLVLRGTVG) traverse the membrane as a helical; Signal-anchor for type II membrane protein segment. The Lumenal segment spans residues 48–463 (INLLTYGVGG…ALKMDAKIES (416 aa)). The tract at residues 82-125 (EIRSDTDDDDDDEEEEPLGVDASTTTTTNSTTTTATAARRRSSN) is disordered. Positions 87 to 99 (TDDDDDDEEEEPL) are enriched in acidic residues. A compositionally biased stretch (low complexity) spans 103–118 (ASTTTTTNSTTTTATA). 3 N-linked (GlcNAc...) asparagine glycosylation sites follow: N110, N125, and N442.

This sequence belongs to the glycosyltransferase 34 family.

It is found in the golgi apparatus membrane. Its function is as follows. Probable glycosyltransferase that may be involved in the biosynthesis of xyloglucan. In Oryza sativa subsp. indica (Rice), this protein is Probable glycosyltransferase 3.